The primary structure comprises 89 residues: MALSVEEKAQIVAEYQQAAGDTGSPEVQVALLTANINKLQGHFKANDKDHHSRRGLIRMVNQRRKLLDYLKGKDTTRYSALIGRLGLRR.

Belongs to the universal ribosomal protein uS15 family. In terms of assembly, part of the 30S ribosomal subunit. Forms a bridge to the 50S subunit in the 70S ribosome, contacting the 23S rRNA.

One of the primary rRNA binding proteins, it binds directly to 16S rRNA where it helps nucleate assembly of the platform of the 30S subunit by binding and bridging several RNA helices of the 16S rRNA. Its function is as follows. Forms an intersubunit bridge (bridge B4) with the 23S rRNA of the 50S subunit in the ribosome. The protein is Small ribosomal subunit protein uS15 of Pseudomonas putida (strain ATCC 700007 / DSM 6899 / JCM 31910 / BCRC 17059 / LMG 24140 / F1).